Reading from the N-terminus, the 183-residue chain is Transcription factor E (183 aa).

Residues 4-97 (YIELVRRYVY…SWSIKDEDIR (94 aa)) enclose the HTH TFE/IIEalpha-type domain.

Belongs to the TFE family. Monomer. Interaction with RNA polymerase subunits RpoF and RpoE is necessary for Tfe stimulatory transcription activity. Able to interact with Tbp and RNA polymerase in the absence of DNA promoter. Interacts both with the preinitiation and elongation complexes.

Functionally, transcription factor that plays a role in the activation of archaeal genes transcribed by RNA polymerase. Facilitates transcription initiation by enhancing TATA-box recognition by TATA-box-binding protein (Tbp), and transcription factor B (Tfb) and RNA polymerase recruitment. Not absolutely required for transcription in vitro, but particularly important in cases where Tbp or Tfb function is not optimal. It dynamically alters the nucleic acid-binding properties of RNA polymerases by stabilizing the initiation complex and destabilizing elongation complexes. Seems to translocate with the RNA polymerase following initiation and acts by binding to the non template strand of the transcription bubble in elongation complexes. The polypeptide is Transcription factor E (Caldivirga maquilingensis (strain ATCC 700844 / DSM 13496 / JCM 10307 / IC-167)).